We begin with the raw amino-acid sequence, 318 residues long: Ribosomal RNA small subunit methyltransferase A (318 aa).

The S-adenosyl-L-methionine site is built by asparagine 40, valine 42, glycine 67, glutamate 88, aspartate 118, and asparagine 137. Basic and acidic residues predominate over residues 296–305 (ADRGGSDREG). The segment at 296 to 318 (ADRGGSDREGTSPPTAGQGAPAC) is disordered.

The protein belongs to the class I-like SAM-binding methyltransferase superfamily. rRNA adenine N(6)-methyltransferase family. RsmA subfamily.

It localises to the cytoplasm. It carries out the reaction adenosine(1518)/adenosine(1519) in 16S rRNA + 4 S-adenosyl-L-methionine = N(6)-dimethyladenosine(1518)/N(6)-dimethyladenosine(1519) in 16S rRNA + 4 S-adenosyl-L-homocysteine + 4 H(+). Specifically dimethylates two adjacent adenosines (A1518 and A1519) in the loop of a conserved hairpin near the 3'-end of 16S rRNA in the 30S particle. May play a critical role in biogenesis of 30S subunits. The chain is Ribosomal RNA small subunit methyltransferase A from Mycobacterium avium (strain 104).